The sequence spans 289 residues: tRNA pseudouridine synthase A (289 aa).

Asp67 (nucleophile) is an active-site residue. Tyr125 is a binding site for substrate.

Belongs to the tRNA pseudouridine synthase TruA family. As to quaternary structure, homodimer.

It catalyses the reaction uridine(38/39/40) in tRNA = pseudouridine(38/39/40) in tRNA. Its function is as follows. Formation of pseudouridine at positions 38, 39 and 40 in the anticodon stem and loop of transfer RNAs. The protein is tRNA pseudouridine synthase A of Prochlorococcus marinus (strain MIT 9211).